A 122-amino-acid chain; its full sequence is Histone H2B 1 (122 aa).

The tract at residues 1 to 30 (MPPKPSAKGAKKAAKTVTKPKDGKKRRHAR) is disordered. An O-linked (GlcNAc) serine glycan is attached at Ser-109. Lys-117 is covalently cross-linked (Glycyl lysine isopeptide (Lys-Gly) (interchain with G-Cter in ubiquitin)).

This sequence belongs to the histone H2B family. In terms of assembly, the nucleosome is a histone octamer containing two molecules each of H2A, H2B, H3 and H4 assembled in one H3-H4 heterotetramer and two H2A-H2B heterodimers. The octamer wraps approximately 147 bp of DNA. Monoubiquitination of Lys-117 gives a specific tag for epigenetic transcriptional activation and is also prerequisite for histone H3 'Lys-4' and 'Lys-79' methylation. In terms of processing, glcNAcylation at Ser-109 promotes monoubiquitination of Lys-117. It fluctuates in response to extracellular glucose, and associates with transcribed genes.

It is found in the nucleus. The protein resides in the chromosome. Its function is as follows. Core component of nucleosome. Nucleosomes wrap and compact DNA into chromatin, limiting DNA accessibility to the cellular machineries which require DNA as a template. Histones thereby play a central role in transcription regulation, DNA repair, DNA replication and chromosomal stability. DNA accessibility is regulated via a complex set of post-translational modifications of histones, also called histone code, and nucleosome remodeling. The chain is Histone H2B 1 (his-11) from Caenorhabditis elegans.